Here is a 143-residue protein sequence, read N- to C-terminus: Transcriptional regulator MraZ (143 aa).

2 consecutive SpoVT-AbrB domains span residues 5 to 47 and 76 to 119; these read EYHH…PIEE and AMES…SAER.

This sequence belongs to the MraZ family. As to quaternary structure, forms oligomers.

It localises to the cytoplasm. It is found in the nucleoid. This chain is Transcriptional regulator MraZ, found in Lactobacillus johnsonii (strain CNCM I-12250 / La1 / NCC 533).